We begin with the raw amino-acid sequence, 241 residues long: Cytochrome b6-f complex iron-sulfur subunit 2, cyanelle (241 aa).

Residues 1-62 (MSAFACSAVA…AAKATTFSIS (62 aa)) constitute a cyanelle transit peptide. Residues 83–103 (LLGAIAGPTIGAGGPFVSFLV) traverse the membrane as a helical segment. One can recognise a Rieske domain in the interval 127-223 (VEKWLETXKP…VNVLEDGVVA (97 aa)). Cys169, His171, Cys187, and His190 together coordinate [2Fe-2S] cluster. Cys174 and Cys189 are joined by a disulfide.

The protein belongs to the Rieske iron-sulfur protein family. The 4 large subunits of the cytochrome b6-f complex are cytochrome b6, subunit IV (17 kDa polypeptide, petD), cytochrome f and the Rieske protein, while the 4 small subunits are petG, petL, petM and petN. The complex functions as a dimer. It depends on [2Fe-2S] cluster as a cofactor.

The protein localises to the plastid. Its subcellular location is the cyanelle thylakoid membrane. It carries out the reaction 2 oxidized [plastocyanin] + a plastoquinol + 2 H(+)(in) = 2 reduced [plastocyanin] + a plastoquinone + 4 H(+)(out). In terms of biological role, component of the cytochrome b6-f complex, which mediates electron transfer between photosystem II (PSII) and photosystem I (PSI), cyclic electron flow around PSI, and state transitions. The polypeptide is Cytochrome b6-f complex iron-sulfur subunit 2, cyanelle (petC-2) (Cyanophora paradoxa).